The primary structure comprises 634 residues: Tyrosine-protein kinase transforming protein erbB (634 aa).

The Protein kinase domain maps to 132 to 399 (FKKVKVLGSG…KMARDPPRYL (268 aa)). ATP-binding positions include 138–146 (LGSGAFGTV) and Lys-165. The Proton acceptor role is filled by Asp-257.

This sequence belongs to the protein kinase superfamily. Tyr protein kinase family. EGF receptor subfamily.

It catalyses the reaction L-tyrosyl-[protein] + ATP = O-phospho-L-tyrosyl-[protein] + ADP + H(+). This is Tyrosine-protein kinase transforming protein erbB (V-ERBB) from Avian leukosis virus (ALV).